The sequence spans 155 residues: Putative pre-16S rRNA nuclease (155 aa).

The protein belongs to the YqgF nuclease family.

Its subcellular location is the cytoplasm. Functionally, could be a nuclease involved in processing of the 5'-end of pre-16S rRNA. This Wolbachia sp. subsp. Drosophila simulans (strain wRi) protein is Putative pre-16S rRNA nuclease.